The following is a 380-amino-acid chain: Ribosomal RNA large subunit methyltransferase F (380 aa).

2 disordered regions span residues 1 to 54 (MSHK…PRNA) and 260 to 279 (SQVM…ATDK). Over residues 21–32 (QRQVVSKSSLQK) the composition is skewed to low complexity. A compositionally biased stretch (basic residues) spans 44 to 53 (QKSKALHPRN). Residues 260–270 (SQVMSPQVQPS) are compositionally biased toward low complexity.

The protein belongs to the methyltransferase superfamily. METTL16/RlmF family.

Its subcellular location is the cytoplasm. It carries out the reaction adenosine(1618) in 23S rRNA + S-adenosyl-L-methionine = N(6)-methyladenosine(1618) in 23S rRNA + S-adenosyl-L-homocysteine + H(+). Specifically methylates the adenine in position 1618 of 23S rRNA. This Shewanella pealeana (strain ATCC 700345 / ANG-SQ1) protein is Ribosomal RNA large subunit methyltransferase F.